A 61-amino-acid polypeptide reads, in one-letter code: uncharacterized protein (61 aa).

This is an uncharacterized protein from Bacillus subtilis (strain 168).